Reading from the N-terminus, the 645-residue chain is Cyclin-D-binding Myb-like transcription factor 1 (645 aa).

Disordered stretches follow at residues 34-71 (QNDGEDLGSDETTEPVHKRIRLSSEDGEDPQDSASTEY) and 95-119 (RDEELESDDLSETTGKDSSAQKKGE). Acidic residues-rich tracts occupy residues 36-46 (DGEDLGSDETT) and 95-105 (RDEELESDDLS). The region spanning 219 to 257 (GKYTDEEINKLKELRQKHGNDWATIGSALGRSASSVKDR) is the Myb-like 1 domain. Residues 262–327 (KDTCNTGKWT…KWLNYLNWKQ (66 aa)) enclose the HTH myb-type domain. Positions 300–323 (WASVAELVGTRSEKQCRSKWLNYL) form a DNA-binding region, H-T-H motif. One can recognise a Myb-like 2 domain in the interval 333–382 (WTKEDDINLVRRIAELEVEDENEINWDILASGWSSVRSPQWLRSKWWTIK). Residues 568-645 (VKEEPSENQT…ILENQEEGSN (78 aa)) are disordered. Basic and acidic residues predominate over residues 587-597 (EQSKQGEKTLD). The segment covering 615–625 (IPTNEDISSDS) has biased composition (polar residues).

The protein belongs to the DMTF1 family.

It is found in the nucleus. In terms of biological role, transcriptional activator which activates the CDKN2A/ARF locus in response to Ras-Raf signaling, thereby promoting p53/TP53-dependent growth arrest. Binds to the consensus sequence 5'-CCCG[GT]ATGT-3'. In Danio rerio (Zebrafish), this protein is Cyclin-D-binding Myb-like transcription factor 1 (dmtf1).